A 545-amino-acid chain; its full sequence is Glucose-6-phosphate isomerase (545 aa).

Glu-351 functions as the Proton donor in the catalytic mechanism. Catalysis depends on residues His-382 and Lys-510.

The protein belongs to the GPI family.

It is found in the cytoplasm. The enzyme catalyses alpha-D-glucose 6-phosphate = beta-D-fructose 6-phosphate. It functions in the pathway carbohydrate biosynthesis; gluconeogenesis. Its pathway is carbohydrate degradation; glycolysis; D-glyceraldehyde 3-phosphate and glycerone phosphate from D-glucose: step 2/4. Functionally, catalyzes the reversible isomerization of glucose-6-phosphate to fructose-6-phosphate. The sequence is that of Glucose-6-phosphate isomerase from Shewanella oneidensis (strain ATCC 700550 / JCM 31522 / CIP 106686 / LMG 19005 / NCIMB 14063 / MR-1).